We begin with the raw amino-acid sequence, 333 residues long: MWSCEDLNYTNSGEEQYLCNEFHLFLFIFSVLYLIICFPVGLCYNVQLVLVNLYNKATMTMPDVYFVNMAIAGLIINAVAPVYLFGPAYTKWSLWSFGNEVYITLLILFNVSSLVIMYSTTLLSLDYYIECALPRTYMSSVYNTKHVCGFIWGGAVLTSFSSLLFYICNHVSTKIIECSKMQNREAADAIMVLIGYVVPIIAVIYALVLILQIRKEATPLDQESGRLDPSVHRLLIATVCTQFILWTPYYVTLLVNTFMDARVKSSNTFYIRIFQFTEGLSNFLAFSSSFVLPLIHRHINKNFSGKLQRLLKRLHCGSQGCTHEHTVVQQVMT.

Over 1-21 (MWSCEDLNYTNSGEEQYLCNE) the chain is Extracellular. Asparagine 8 is a glycosylation site (N-linked (GlcNAc...) asparagine). Residues 22 to 42 (FHLFLFIFSVLYLIICFPVGL) form a helical membrane-spanning segment. Residues 43-65 (CYNVQLVLVNLYNKATMTMPDVY) are Cytoplasmic-facing. A helical transmembrane segment spans residues 66–86 (FVNMAIAGLIINAVAPVYLFG). Residues 87–102 (PAYTKWSLWSFGNEVY) lie on the Extracellular side of the membrane. A helical membrane pass occupies residues 103–123 (ITLLILFNVSSLVIMYSTTLL). Over 124–146 (SLDYYIECALPRTYMSSVYNTKH) the chain is Cytoplasmic. A helical membrane pass occupies residues 147–167 (VCGFIWGGAVLTSFSSLLFYI). Over 168 to 189 (CNHVSTKIIECSKMQNREAADA) the chain is Extracellular. The chain crosses the membrane as a helical span at residues 190 to 210 (IMVLIGYVVPIIAVIYALVLI). The Cytoplasmic segment spans residues 211-234 (LQIRKEATPLDQESGRLDPSVHRL). Residues 235-255 (LIATVCTQFILWTPYYVTLLV) form a helical membrane-spanning segment. The Extracellular segment spans residues 256–275 (NTFMDARVKSSNTFYIRIFQ). Residues 276–296 (FTEGLSNFLAFSSSFVLPLIH) form a helical membrane-spanning segment. Residues 297-333 (RHINKNFSGKLQRLLKRLHCGSQGCTHEHTVVQQVMT) are Cytoplasmic-facing.

Belongs to the G-protein coupled receptor 1 family.

It is found in the cell membrane. G-protein coupled receptor required for the regulation of plasma cholesterol levels. The sequence is that of G-protein coupled receptor 146 (gpr146) from Xenopus laevis (African clawed frog).